Consider the following 154-residue polypeptide: Myoglobin (154 aa).

One can recognise a Globin domain in the interval 2 to 148 (GLSDGEWQLV…FRNDIAAKYK (147 aa)). Ser-4 bears the Phosphoserine mark. Nitrite is bound at residue His-65. His-65 is a binding site for O2. The residue at position 68 (Thr-68) is a Phosphothreonine. His-94 serves as a coordination point for heme b.

The protein belongs to the globin family. As to quaternary structure, monomeric.

The protein localises to the cytoplasm. It localises to the sarcoplasm. The enzyme catalyses Fe(III)-heme b-[protein] + nitric oxide + H2O = Fe(II)-heme b-[protein] + nitrite + 2 H(+). It catalyses the reaction H2O2 + AH2 = A + 2 H2O. Monomeric heme protein which primary function is to store oxygen and facilitate its diffusion within muscle tissues. Reversibly binds oxygen through a pentacoordinated heme iron and enables its timely and efficient release as needed during periods of heightened demand. Depending on the oxidative conditions of tissues and cells, and in addition to its ability to bind oxygen, it also has a nitrite reductase activity whereby it regulates the production of bioactive nitric oxide. Under stress conditions, like hypoxia and anoxia, it also protects cells against reactive oxygen species thanks to its pseudoperoxidase activity. In Lepilemur mustelinus (Weasel sportive lemur), this protein is Myoglobin (MB).